A 467-amino-acid chain; its full sequence is Uronate isomerase (467 aa).

It belongs to the metallo-dependent hydrolases superfamily. Uronate isomerase family.

It catalyses the reaction D-glucuronate = D-fructuronate. It carries out the reaction aldehydo-D-galacturonate = keto-D-tagaturonate. Its pathway is carbohydrate metabolism; pentose and glucuronate interconversion. The sequence is that of Uronate isomerase from Geobacillus thermodenitrificans (strain NG80-2).